Here is a 270-residue protein sequence, read N- to C-terminus: Dehydrodolichyl diphosphate synthase (270 aa).

The protein belongs to the UPP synthase family.

It localises to the endoplasmic reticulum membrane. The protein operates within protein modification; protein glycosylation. Functionally, cis-prenyl transferase that adds multiple copies of isopentenyl pyrophosphate (IPP) to farnesyl pyrophosphate (FPP) to produce dehydrodolichyl diphosphate (Dedol-PP). This Encephalitozoon cuniculi (strain GB-M1) (Microsporidian parasite) protein is Dehydrodolichyl diphosphate synthase (RER2).